A 376-amino-acid polypeptide reads, in one-letter code: Transmembrane protein 43 homolog (376 aa).

Residues 1–10 (MASLSETLRS) lie on the Cytoplasmic side of the membrane. Residues 11–31 (HWPIALFGVILFVAGGTELYW) traverse the membrane as a helical segment. Residues 32-277 (NEGRAVHNMM…EVFRLEARAQ (246 aa)) are Lumenal-facing. Residues 278 to 298 (VLHTWWWRFVGWLLIFFGVTC) form a helical membrane-spanning segment. The Cytoplasmic portion of the chain corresponds to 299 to 323 (NTKILRLLFVRVPLLVALAPDPQFP). Helical transmembrane passes span 324-344 (VTGN…VAWI) and 345-365 (LHRP…YVWF). Residues 366–376 (TRNLVDYHRLD) are Cytoplasmic-facing.

It belongs to the TMEM43 family.

It is found in the endoplasmic reticulum membrane. The protein resides in the nucleus envelope. In terms of biological role, involved in lipid metabolism and utilization. This is Transmembrane protein 43 homolog from Drosophila melanogaster (Fruit fly).